The following is a 283-amino-acid chain: Demethylrebeccamycin-D-glucose O-methyltransferase (283 aa).

S-adenosyl-L-methionine-binding positions include Ser101, Gln106, 129-130, Leu146, and His151; that span reads DA.

Belongs to the methyltransferase superfamily. Monomer.

The catalysed reaction is 4'-demethylrebeccamycin + S-adenosyl-L-methionine = rebeccamycin + S-adenosyl-L-homocysteine + H(+). In terms of biological role, glycosyl O-methyltransferase that catalyzes the final step in the biosynthesis of rebeccamycin, an indolocarbazole alkaloid that inhibits topoisomerase 1. Has broad substrate specificity and functions as glycosyl O-methyltransferase on a number of rebeccamycin analogs. This chain is Demethylrebeccamycin-D-glucose O-methyltransferase (rebM), found in Lentzea aerocolonigenes (Lechevalieria aerocolonigenes).